The chain runs to 187 residues: Elongation factor P (187 aa).

The protein belongs to the elongation factor P family.

Its subcellular location is the cytoplasm. It participates in protein biosynthesis; polypeptide chain elongation. In terms of biological role, involved in peptide bond synthesis. Stimulates efficient translation and peptide-bond synthesis on native or reconstituted 70S ribosomes in vitro. Probably functions indirectly by altering the affinity of the ribosome for aminoacyl-tRNA, thus increasing their reactivity as acceptors for peptidyl transferase. The sequence is that of Elongation factor P from Desulfosudis oleivorans (strain DSM 6200 / JCM 39069 / Hxd3) (Desulfococcus oleovorans).